The chain runs to 1257 residues: Pesticidal crystal protein Cry12Aa (1257 aa).

The protein belongs to the delta endotoxin family.

Its function is as follows. Endotoxin with nematicidal activity. This chain is Pesticidal crystal protein Cry12Aa (cry12Aa), found in Bacillus thuringiensis.